Reading from the N-terminus, the 384-residue chain is MDLVDKRDVLIGDFRPSLGFYGGVRVGVYLDTTEPKHAKIKGFAMETLKRSSKVWLQELRSNLNIFWGTIESEISKNGAASYIFPLQRCIFSFLCASLAGVDASVSPDIAENGWKTINTWLALQVIPTAKLGVVPQPLEEILLHTWPYPSLLIAGNYKKLYNFIDENAGDCLRLGQEEFGLTRDEAIQNLLFVLGFNAYGGFSVFLPSLIGRITGDNSGLQERIRTEVRRVCGSGSDLNFKTVNEMELVKSVVYETLRFSPPVPLQFARARKDFQISSHDAVFEVKKGELLCGYQPLVMRDANVFDEPEEFKPDRYVGETGSELLNYLYWSNGPQTGTPSASNKQCAAKDIVTLTASLLVADLFLRYDTITGDSGSIKAVVKAK.

Cysteine 346 lines the heme pocket.

This sequence belongs to the cytochrome P450 family. Requires heme as cofactor. Expressed in roots, leaves, flowers and siliques.

The chain is Probable inactive linolenate hydroperoxide lyase from Arabidopsis thaliana (Mouse-ear cress).